The sequence spans 318 residues: Glutathione synthetase (318 aa).

Residues 125 to 311 (EKLFTAWFPE…ITGKLMDAIE (187 aa)) form the ATP-grasp domain. Residue 151-208 (FRQEHGDIILKPLDGMGGASIFRVKENDPNVSVIIETLTNHGQNYAMAQTFVPDISNG) participates in ATP binding. Mg(2+)-binding residues include Glu-282 and Asn-284.

Belongs to the prokaryotic GSH synthase family. It depends on Mg(2+) as a cofactor. Requires Mn(2+) as cofactor.

It carries out the reaction gamma-L-glutamyl-L-cysteine + glycine + ATP = glutathione + ADP + phosphate + H(+). Its pathway is sulfur metabolism; glutathione biosynthesis; glutathione from L-cysteine and L-glutamate: step 2/2. The protein is Glutathione synthetase of Vibrio vulnificus (strain YJ016).